Here is a 237-residue protein sequence, read N- to C-terminus: Chalcone--flavanone isomerase 1 (237 aa).

Positions 48, 113, and 190 each coordinate substrate.

Belongs to the chalcone isomerase family.

It carries out the reaction a chalcone = a flavanone.. It functions in the pathway secondary metabolite biosynthesis; flavonoid biosynthesis. In terms of biological role, catalyzes the intramolecular cyclization of bicyclic chalcones into tricyclic (S)-flavanones. Responsible for the isomerization of 4,2',4',6'-tetrahydroxychalcone (also termed chalcone) into naringenin. In Fragaria ananassa (Strawberry), this protein is Chalcone--flavanone isomerase 1 (CHI1).